A 478-amino-acid chain; its full sequence is Membrane-bound lytic murein transglycosylase F (478 aa).

The signal sequence occupies residues 1 to 22; sequence MTRFLFAIILGLLLTACQQETV. The tract at residues 23–257 is non-LT domain; sequence EETEFVPHKL…HLNEKYFGHV (235 aa). The segment at 258-478 is LT domain; sequence KRFDYIDTRA…PGTLSPDKPK (221 aa). E302 is an active-site residue. Positions 447–478 are disordered; that stretch reads KQQNSEEVAPSDLTAEETPVPAPGTLSPDKPK.

The protein in the N-terminal section; belongs to the bacterial solute-binding protein 3 family. This sequence in the C-terminal section; belongs to the transglycosylase Slt family.

The protein localises to the cell outer membrane. The catalysed reaction is Exolytic cleavage of the (1-&gt;4)-beta-glycosidic linkage between N-acetylmuramic acid (MurNAc) and N-acetylglucosamine (GlcNAc) residues in peptidoglycan, from either the reducing or the non-reducing ends of the peptidoglycan chains, with concomitant formation of a 1,6-anhydrobond in the MurNAc residue.. Functionally, murein-degrading enzyme that degrades murein glycan strands and insoluble, high-molecular weight murein sacculi, with the concomitant formation of a 1,6-anhydromuramoyl product. Lytic transglycosylases (LTs) play an integral role in the metabolism of the peptidoglycan (PG) sacculus. Their lytic action creates space within the PG sacculus to allow for its expansion as well as for the insertion of various structures such as secretion systems and flagella. In Shewanella oneidensis (strain ATCC 700550 / JCM 31522 / CIP 106686 / LMG 19005 / NCIMB 14063 / MR-1), this protein is Membrane-bound lytic murein transglycosylase F.